The sequence spans 189 residues: Elongation factor P (189 aa).

Belongs to the elongation factor P family.

It localises to the cytoplasm. It functions in the pathway protein biosynthesis; polypeptide chain elongation. In terms of biological role, involved in peptide bond synthesis. Stimulates efficient translation and peptide-bond synthesis on native or reconstituted 70S ribosomes in vitro. Probably functions indirectly by altering the affinity of the ribosome for aminoacyl-tRNA, thus increasing their reactivity as acceptors for peptidyl transferase. This chain is Elongation factor P, found in Xanthobacter autotrophicus (strain ATCC BAA-1158 / Py2).